The chain runs to 391 residues: Bifunctional enzyme IspD/IspF (391 aa).

Positions 1 to 230 are 2-C-methyl-D-erythritol 4-phosphate cytidylyltransferase; it reads MLAAGRGKRA…KKKMQMFPDI (230 aa). The tract at residues 231–391 is 2-C-methyl-D-erythritol 2,4-cyclodiphosphate synthase; sequence RTGNGYDVHS…TVLYPGEIPK (161 aa). Positions 237 and 239 each coordinate a divalent metal cation. 4-CDP-2-C-methyl-D-erythritol 2-phosphate-binding positions include 237 to 239 and 263 to 264; these read DVH and HS. His-271 is a binding site for a divalent metal cation. 4-CDP-2-C-methyl-D-erythritol 2-phosphate is bound by residues 285–287, 361–364, Phe-368, and Arg-371; these read DIG and TTNE.

It in the N-terminal section; belongs to the IspD/TarI cytidylyltransferase family. IspD subfamily. In the C-terminal section; belongs to the IspF family. A divalent metal cation is required as a cofactor.

The catalysed reaction is 2-C-methyl-D-erythritol 4-phosphate + CTP + H(+) = 4-CDP-2-C-methyl-D-erythritol + diphosphate. The enzyme catalyses 4-CDP-2-C-methyl-D-erythritol 2-phosphate = 2-C-methyl-D-erythritol 2,4-cyclic diphosphate + CMP. It participates in isoprenoid biosynthesis; isopentenyl diphosphate biosynthesis via DXP pathway; isopentenyl diphosphate from 1-deoxy-D-xylulose 5-phosphate: step 2/6. The protein operates within isoprenoid biosynthesis; isopentenyl diphosphate biosynthesis via DXP pathway; isopentenyl diphosphate from 1-deoxy-D-xylulose 5-phosphate: step 4/6. In terms of biological role, bifunctional enzyme that catalyzes the formation of 4-diphosphocytidyl-2-C-methyl-D-erythritol from CTP and 2-C-methyl-D-erythritol 4-phosphate (MEP) (IspD), and catalyzes the conversion of 4-diphosphocytidyl-2-C-methyl-D-erythritol 2-phosphate (CDP-ME2P) to 2-C-methyl-D-erythritol 2,4-cyclodiphosphate (ME-CPP) with a corresponding release of cytidine 5-monophosphate (CMP) (IspF). This chain is Bifunctional enzyme IspD/IspF, found in Bartonella quintana (strain Toulouse) (Rochalimaea quintana).